A 155-amino-acid polypeptide reads, in one-letter code: 3-hydroxyacyl-[acyl-carrier-protein] dehydratase FabZ (155 aa).

H54 is a catalytic residue.

The protein belongs to the thioester dehydratase family. FabZ subfamily.

It localises to the cytoplasm. The enzyme catalyses a (3R)-hydroxyacyl-[ACP] = a (2E)-enoyl-[ACP] + H2O. In terms of biological role, involved in unsaturated fatty acids biosynthesis. Catalyzes the dehydration of short chain beta-hydroxyacyl-ACPs and long chain saturated and unsaturated beta-hydroxyacyl-ACPs. This Burkholderia lata (strain ATCC 17760 / DSM 23089 / LMG 22485 / NCIMB 9086 / R18194 / 383) protein is 3-hydroxyacyl-[acyl-carrier-protein] dehydratase FabZ.